The following is a 561-amino-acid chain: Long-chain-fatty-acid--CoA ligase (561 aa).

Residue 213–224 (YTGGTTGVAKGA) coordinates ATP.

It belongs to the ATP-dependent AMP-binding enzyme family. Mg(2+) is required as a cofactor.

Its subcellular location is the membrane. It carries out the reaction a long-chain fatty acid + ATP + CoA = a long-chain fatty acyl-CoA + AMP + diphosphate. It participates in lipid metabolism; fatty acid beta-oxidation. Functionally, catalyzes the esterification, concomitant with transport, of exogenous long-chain fatty acids into metabolically active CoA thioesters for subsequent degradation or incorporation into phospholipids. This is Long-chain-fatty-acid--CoA ligase (fadD) from Escherichia coli O157:H7.